The sequence spans 403 residues: MNLLLTNASIVTVETNDTGYLIKHNHFINIINGKIAQIGGMASCPLASSGKQLDCEHKLLTPGFIDCHTHLVFAGNRANEFEQRLTGVPYQEIARQGGGIMTTVNATRKATEAQLLEKALQHLSGLIKDGVTTVEIKSGYGLDLESELKILRVAKQIEQQANIKVSTTLLAAHAVPLEFKDNPDRYIDYVCNTIIPAAVKAQLVDYVDIFCEGIGFNLKQTERVFKSALSFGLGIKGHTEQLSNSGGSALAAKMGASSVDHLEYLDETGVKALADNGTVATLLPGAFYFLRETQLPPVELLRTYKVPIALATDFNPGTSPIASLLMIMNMGCTLFGLTPEEALRGVTCHAAKALGLAQQRGQIKVGFEADLCLWNIQHPAQLAYEIGTNLLISRIINGVLCND.

Fe(3+) contacts are provided by histidine 68 and histidine 70. Zn(2+) is bound by residues histidine 68 and histidine 70. 4-imidazolone-5-propanoate-binding residues include arginine 77, tyrosine 140, and histidine 173. Tyrosine 140 is an N-formimidoyl-L-glutamate binding site. Histidine 238 lines the Fe(3+) pocket. Histidine 238 serves as a coordination point for Zn(2+). Residue glutamine 241 coordinates 4-imidazolone-5-propanoate. Residue aspartate 313 coordinates Fe(3+). Position 313 (aspartate 313) interacts with Zn(2+). N-formimidoyl-L-glutamate contacts are provided by asparagine 315 and glycine 317. A 4-imidazolone-5-propanoate-binding site is contributed by threonine 318.

Belongs to the metallo-dependent hydrolases superfamily. HutI family. It depends on Zn(2+) as a cofactor. Requires Fe(3+) as cofactor.

Its subcellular location is the cytoplasm. It carries out the reaction 4-imidazolone-5-propanoate + H2O = N-formimidoyl-L-glutamate. It participates in amino-acid degradation; L-histidine degradation into L-glutamate; N-formimidoyl-L-glutamate from L-histidine: step 3/3. Catalyzes the hydrolytic cleavage of the carbon-nitrogen bond in imidazolone-5-propanoate to yield N-formimidoyl-L-glutamate. It is the third step in the universal histidine degradation pathway. The sequence is that of Imidazolonepropionase from Psychromonas ingrahamii (strain DSM 17664 / CCUG 51855 / 37).